Here is a 499-residue protein sequence, read N- to C-terminus: Anaerobic nitric oxide reductase flavorubredoxin (499 aa).

Positions 30–210 (TKGTSYNSYL…PFSALVTAKI (181 aa)) are zinc metallo-hydrolase. Fe cation is bound by residues H79, E81, D83, H147, D166, and H227. One can recognise a Flavodoxin-like domain in the interval 254 to 393 (ITLFYDSMSN…LCREHGQFIA (140 aa)). Residues 260–264 (SMSNN) and 342–369 (AFGS…ETAV) contribute to the FMN site. In terms of domain architecture, Rubredoxin-like spans 447-498 (KQCMLCTVCNWVYDPEIGEPNQGVEPNTAWIDVPDYFLCPECNLGKDVFVEV). Positions 452, 455, 485, and 488 each coordinate Fe cation.

The protein in the N-terminal section; belongs to the zinc metallo-hydrolase group 3 family. In terms of assembly, homotetramer. Fe cation is required as a cofactor. It depends on FMN as a cofactor.

The protein resides in the cytoplasm. It participates in nitrogen metabolism; nitric oxide reduction. Its function is as follows. Anaerobic nitric oxide reductase; uses NADH to detoxify nitric oxide (NO), protecting several 4Fe-4S NO-sensitive enzymes. Has at least 2 reductase partners, only one of which (NorW, flavorubredoxin reductase) has been identified. NO probably binds to the di-iron center; electrons enter from the NorW at rubredoxin and are transferred sequentially to the FMN center and the di-iron center. Also able to function as an aerobic oxygen reductase. This chain is Anaerobic nitric oxide reductase flavorubredoxin, found in Aliivibrio salmonicida (strain LFI1238) (Vibrio salmonicida (strain LFI1238)).